Reading from the N-terminus, the 124-residue chain is Small ribosomal subunit protein uS12 (124 aa).

At aspartate 89 the chain carries 3-methylthioaspartic acid. The segment at 104 to 124 is disordered; that stretch reads SAGVQNRNRGRSKYGTKRPKK. A compositionally biased stretch (basic residues) spans 111–124; sequence NRGRSKYGTKRPKK.

Belongs to the universal ribosomal protein uS12 family. Part of the 30S ribosomal subunit. Contacts proteins S8 and S17. May interact with IF1 in the 30S initiation complex.

Functionally, with S4 and S5 plays an important role in translational accuracy. In terms of biological role, interacts with and stabilizes bases of the 16S rRNA that are involved in tRNA selection in the A site and with the mRNA backbone. Located at the interface of the 30S and 50S subunits, it traverses the body of the 30S subunit contacting proteins on the other side and probably holding the rRNA structure together. The combined cluster of proteins S8, S12 and S17 appears to hold together the shoulder and platform of the 30S subunit. The chain is Small ribosomal subunit protein uS12 from Desulforamulus reducens (strain ATCC BAA-1160 / DSM 100696 / MI-1) (Desulfotomaculum reducens).